The sequence spans 35 residues: Photosystem II reaction center protein Psb30 (35 aa).

The helical transmembrane segment at 7–27 (VFVQLLLLALIVLAGPAVILL) threads the bilayer.

It belongs to the Psb30/Ycf12 family. In terms of assembly, PSII is composed of 1 copy each of membrane proteins PsbA, PsbB, PsbC, PsbD, PsbE, PsbF, PsbH, PsbI, PsbJ, PsbK, PsbL, PsbM, PsbT, PsbX, PsbY, PsbZ, Psb30/Ycf12, peripheral proteins PsbO, CyanoQ (PsbQ), PsbU, PsbV and a large number of cofactors. It forms dimeric complexes.

It is found in the cellular thylakoid membrane. In terms of biological role, a core subunit of photosystem II (PSII), probably helps stabilize the reaction center. The chain is Photosystem II reaction center protein Psb30 from Synechococcus sp. (strain JA-3-3Ab) (Cyanobacteria bacterium Yellowstone A-Prime).